A 498-amino-acid chain; its full sequence is ATP synthase subunit beta, chloroplastic (498 aa).

Thr-6 is subject to Phosphothreonine. Phosphoserine is present on Ser-13. 172–179 is a binding site for ATP; that stretch reads GGAGVGKT.

Belongs to the ATPase alpha/beta chains family. As to quaternary structure, F-type ATPases have 2 components, CF(1) - the catalytic core - and CF(0) - the membrane proton channel. CF(1) has five subunits: alpha(3), beta(3), gamma(1), delta(1), epsilon(1). CF(0) has four main subunits: a(1), b(1), b'(1) and c(9-12).

The protein localises to the plastid. The protein resides in the chloroplast thylakoid membrane. It carries out the reaction ATP + H2O + 4 H(+)(in) = ADP + phosphate + 5 H(+)(out). Functionally, produces ATP from ADP in the presence of a proton gradient across the membrane. The catalytic sites are hosted primarily by the beta subunits. In Brassica napus (Rape), this protein is ATP synthase subunit beta, chloroplastic.